Here is a 308-residue protein sequence, read N- to C-terminus: tRNA dimethylallyltransferase (308 aa).

Position 14 to 21 (14 to 21 (GPTASGKT)) interacts with ATP. 16 to 21 (TASGKT) is a substrate binding site. 3 interaction with substrate tRNA regions span residues 39–42 (DSAL), 163–167 (QRLSR), and 244–249 (RCVGYR).

Belongs to the IPP transferase family. Monomer. Mg(2+) serves as cofactor.

It carries out the reaction adenosine(37) in tRNA + dimethylallyl diphosphate = N(6)-dimethylallyladenosine(37) in tRNA + diphosphate. In terms of biological role, catalyzes the transfer of a dimethylallyl group onto the adenine at position 37 in tRNAs that read codons beginning with uridine, leading to the formation of N6-(dimethylallyl)adenosine (i(6)A). This Shewanella baltica (strain OS185) protein is tRNA dimethylallyltransferase.